Consider the following 754-residue polypeptide: Phosphoribosylformylglycinamidine synthase subunit PurL (754 aa).

Residue histidine 54 is part of the active site. 2 residues coordinate ATP: tyrosine 57 and lysine 101. Glutamate 103 contacts Mg(2+). Substrate contacts are provided by residues 104–107 (SHNH) and arginine 126. Histidine 105 (proton acceptor) is an active-site residue. Aspartate 127 is a binding site for Mg(2+). Substrate is bound at residue glutamine 252. Aspartate 280 serves as a coordination point for Mg(2+). Position 324–326 (324–326 (ESQ)) interacts with substrate. Positions 386-412 (PVYQRPVSRPESQEALNADSSKGLPRP) are disordered. ATP is bound by residues asparagine 512 and glycine 549. Position 550 (asparagine 550) interacts with Mg(2+). Serine 552 is a binding site for substrate.

Belongs to the FGAMS family. In terms of assembly, monomer. Part of the FGAM synthase complex composed of 1 PurL, 1 PurQ and 2 PurS subunits.

The protein resides in the cytoplasm. It catalyses the reaction N(2)-formyl-N(1)-(5-phospho-beta-D-ribosyl)glycinamide + L-glutamine + ATP + H2O = 2-formamido-N(1)-(5-O-phospho-beta-D-ribosyl)acetamidine + L-glutamate + ADP + phosphate + H(+). The protein operates within purine metabolism; IMP biosynthesis via de novo pathway; 5-amino-1-(5-phospho-D-ribosyl)imidazole from N(2)-formyl-N(1)-(5-phospho-D-ribosyl)glycinamide: step 1/2. In terms of biological role, part of the phosphoribosylformylglycinamidine synthase complex involved in the purines biosynthetic pathway. Catalyzes the ATP-dependent conversion of formylglycinamide ribonucleotide (FGAR) and glutamine to yield formylglycinamidine ribonucleotide (FGAM) and glutamate. The FGAM synthase complex is composed of three subunits. PurQ produces an ammonia molecule by converting glutamine to glutamate. PurL transfers the ammonia molecule to FGAR to form FGAM in an ATP-dependent manner. PurS interacts with PurQ and PurL and is thought to assist in the transfer of the ammonia molecule from PurQ to PurL. The sequence is that of Phosphoribosylformylglycinamidine synthase subunit PurL from Mycobacterium leprae (strain Br4923).